Reading from the N-terminus, the 375-residue chain is Acetylornithine aminotransferase (375 aa).

Pyridoxal 5'-phosphate contacts are provided by residues 102 to 103 (GA) and F129. R132 lines the N(2)-acetyl-L-ornithine pocket. 214-217 (DEVQ) is a pyridoxal 5'-phosphate binding site. K243 is modified (N6-(pyridoxal phosphate)lysine). N(2)-acetyl-L-ornithine is bound at residue S271. A pyridoxal 5'-phosphate-binding site is contributed by T272.

This sequence belongs to the class-III pyridoxal-phosphate-dependent aminotransferase family. ArgD subfamily. As to quaternary structure, homodimer. The cofactor is pyridoxal 5'-phosphate.

The protein resides in the cytoplasm. It carries out the reaction N(2)-acetyl-L-ornithine + 2-oxoglutarate = N-acetyl-L-glutamate 5-semialdehyde + L-glutamate. Its pathway is amino-acid biosynthesis; L-arginine biosynthesis; N(2)-acetyl-L-ornithine from L-glutamate: step 4/4. This chain is Acetylornithine aminotransferase, found in Archaeoglobus fulgidus (strain ATCC 49558 / DSM 4304 / JCM 9628 / NBRC 100126 / VC-16).